We begin with the raw amino-acid sequence, 518 residues long: Protease Do-like 4, mitochondrial (518 aa).

The transit peptide at 1-23 directs the protein to the mitochondrion; that stretch reads MLFRFLQTLARFCRFLLISVLGF. The interval 98–262 is serine protease; it reads ESGGSGFVIS…IPTPVIKHFL (165 aa). Active-site charge relay system residues include His-116, Asp-147, and Ser-225. A PDZ domain is found at 278-358; sequence DISYQLMENS…HFVSMKKLDE (81 aa).

The protein belongs to the peptidase S1C family.

It is found in the mitochondrion membrane. Putative serine protease. The protein is Protease Do-like 4, mitochondrial (DEGP4) of Arabidopsis thaliana (Mouse-ear cress).